The following is a 296-amino-acid chain: 5,10-methylenetetrahydrofolate reductase (296 aa).

Glu-28 (proton donor/acceptor) is an active-site residue. Thr-59 is an NADH binding site. Tyr-60, Ala-62, His-88, Arg-118, Gly-119, Asp-120, Ala-132, Tyr-152, His-156, Ala-159, Asp-165, Asn-168, Arg-171, and Lys-172 together coordinate FAD. Asp-120 is a (6S)-5-methyl-5,6,7,8-tetrahydrofolate binding site. Gln-183 provides a ligand contact to NADH. Gln-183, Gln-219, and Arg-279 together coordinate (6S)-5-methyl-5,6,7,8-tetrahydrofolate.

This sequence belongs to the methylenetetrahydrofolate reductase family. Homotetramer. It depends on FAD as a cofactor.

The enzyme catalyses (6S)-5-methyl-5,6,7,8-tetrahydrofolate + NAD(+) = (6R)-5,10-methylene-5,6,7,8-tetrahydrofolate + NADH + H(+). Its pathway is one-carbon metabolism; tetrahydrofolate interconversion. It functions in the pathway amino-acid biosynthesis; L-methionine biosynthesis via de novo pathway. Catalyzes the NADH-dependent reduction of 5,10-methylenetetrahydrofolate to 5-methyltetrahydrofolate. Is required to provide the methyl group necessary for methionine synthetase to convert homocysteine to methionine; the methyl group is given by 5-methyltetrahydrofolate. Can also use NADPH as the reductant, but much less effectively than NADH. The sequence is that of 5,10-methylenetetrahydrofolate reductase from Escherichia coli (strain K12).